A 423-amino-acid chain; its full sequence is MLWRNEITEFMDQLSKYSQEILKTFKQLRPSEYKQYNEFLTQVTSLLQKTPEKIPELVDHIFNYLDNVEKICELLVNASSIIISSKIREQVKHGMSFSYKADLDSLADVLSQKQYVLMNLSKNIAAQYFNTCLKQGKSRLDLKAASVFYNSRPRTASSAELYRKMLYAYGSLQEINYYTEKARNKTLDVEESDSMAIIERTARHNLSLMHPLEAMGLTFGATNTDADPEDLKNKTVINLTLPQATESITYHLKSLMQLKKVSTASGLNTNILKAFDNIISTPVKKNKMASKLAPGMDVVFTSDNGKTFFTKNILSKNMLAGPKERVFAYNNLINNLNNSCFIQNHTDFLKQQDSWPFYDAHNFTNKFLMQPIFSGQTRPRLQGAMEAAHVETHLTAFLQSIQPSRPQDPSVLASPKLSALILN.

It belongs to the asfivirus E423R family.

Its subcellular location is the virion. This is an uncharacterized protein from African swine fever virus (isolate Tick/Malawi/Lil 20-1/1983) (ASFV).